A 371-amino-acid chain; its full sequence is 2-oxoadipate dioxygenase/decarboxylase, chloroplastic (371 aa).

Residues 1–50 (MISLHSSAIKASLYGSFPSSLRSTLSVSFSAGSLIRLPSVGKRNLSVVVS) constitute a chloroplast transit peptide. Residues His113 and Arg117 each contribute to the 2-oxoadipate site. His113 provides a ligand contact to Fe(2+). His250 contacts Fe(2+). The 2-oxoadipate site is built by Gln296 and Tyr320. Glu322 contributes to the Fe(2+) binding site.

This sequence belongs to the 2-oxoadipate dioxygenase/decarboxylase family. Requires Fe(2+) as cofactor.

Its subcellular location is the plastid. It localises to the chloroplast. The catalysed reaction is 2-oxoadipate + O2 = (R)-2-hydroxyglutarate + CO2. Its pathway is amino-acid degradation. Its function is as follows. Catalyzes the decarboxylation and hydroxylation of 2-oxoadipate (2OA) to form D-2-hydroxyglutarate (D-2-HGA). Is involved in a D-lysine catabolic pathway. This is 2-oxoadipate dioxygenase/decarboxylase, chloroplastic from Arabidopsis thaliana (Mouse-ear cress).